A 529-amino-acid chain; its full sequence is Glutamyl-tRNA reductase (529 aa).

47-50 (TCNR) contacts substrate. Cys-48 serves as the catalytic Nucleophile. Positions 56–80 (SPRQQAPAPPRPGSAPPPSDEELSR) are disordered. A compositionally biased stretch (pro residues) spans 62–73 (PAPPRPGSAPPP). Residues Ser-125, 130–132 (EPQ), and Gln-136 contribute to the substrate site. 205-210 (GAGDMA) contributes to the NADP(+) binding site. The interval 454–505 (RGAVDGPPTPRSARGAAPPASGARGGGSPRHADPRPQAAEDNGVYARQPGGR) is disordered. The span at 464–475 (RSARGAAPPASG) shows a compositional bias: low complexity.

The protein belongs to the glutamyl-tRNA reductase family. Homodimer.

The catalysed reaction is (S)-4-amino-5-oxopentanoate + tRNA(Glu) + NADP(+) = L-glutamyl-tRNA(Glu) + NADPH + H(+). It functions in the pathway porphyrin-containing compound metabolism; protoporphyrin-IX biosynthesis; 5-aminolevulinate from L-glutamyl-tRNA(Glu): step 1/2. Its function is as follows. Catalyzes the NADPH-dependent reduction of glutamyl-tRNA(Glu) to glutamate 1-semialdehyde (GSA). The polypeptide is Glutamyl-tRNA reductase (Sorangium cellulosum (strain So ce56) (Polyangium cellulosum (strain So ce56))).